Here is a 468-residue protein sequence, read N- to C-terminus: MTLEHQFDYDAIIIGSGPGGEGAAMGLAKHGAKIAVIERHYNVGGGCTHWGTIPSKALRHAVSRIIEFNQNPLYSDNSRIIRSSFSDILRHADSVIGQQTRMRQGFYERNQCELFSGEASFIDAHTIAVHYPDNTHETLTAANIIIATGSRPYHPAEVDFNHPRIYDSDSILQLDHEPQHVIIYGAGVIGCEYASIFRGLSVKVDLINTRDRLLAFLDQEMSDALSYHFWNNGVVIRHNEEFDSIEGLSDGVIVNLKSGKKMKADCLLYANGRTGNTETLGLENIGLSTDSRGQLKVNSMYQTALAHIYAIGDVIGYPSLASAAYDQGRLAAQAIIKGDASAHLIEDIPTGIYTIPEISSVGKTEQELTAMKVPYEVGRAQFKHLARAQIVGMNVGSLKILFHRETKQILGIHCFGERAAEIIHIGQAIMEQKGEGNTIEYFVNTTFNYPTMAEAYRVAALNGLNRLF.

Residue 38–47 (ERHYNVGGGC) coordinates FAD.

The protein belongs to the class-I pyridine nucleotide-disulfide oxidoreductase family. FAD is required as a cofactor.

It is found in the cytoplasm. The enzyme catalyses NAD(+) + NADPH = NADH + NADP(+). Conversion of NADPH, generated by peripheral catabolic pathways, to NADH, which can enter the respiratory chain for energy generation. In Pectobacterium atrosepticum (strain SCRI 1043 / ATCC BAA-672) (Erwinia carotovora subsp. atroseptica), this protein is Soluble pyridine nucleotide transhydrogenase.